The sequence spans 46 residues: Large ribosomal subunit protein bL36 (46 aa).

It belongs to the bacterial ribosomal protein bL36 family.

This is Large ribosomal subunit protein bL36 from Salmonella agona (strain SL483).